A 274-amino-acid chain; its full sequence is KLKDKTVGIVGAGNTGSAVAKCLQAYGVTVLLHDPVIQDSDPRDFISLDELIACCDVISLHVPITKTGEHKTWYLFDEARLNSLKQGTWLLNCCRGEVIDNQALIKVKLERPDIKLVLDVWEGEPNPMHELIPLVELATPHIAGYSLEGKARGTFMLYQKLMQVLGKDADKSMTALLPSLWSVQLDVESIPDQKSLLQLARFIYDLRDDDELFRKTILDDSSKNPQVNSLNNNGFDLMRKNHLHRREFSALRLVNTGHSDVNWLTNLGFSGIGQ.

D34 contributes to the NAD(+) binding site. The active site involves R95. D119 serves as a coordination point for NAD(+). E124 is an active-site residue. H141 serves as the catalytic Proton donor. G144 is an NAD(+) binding site. Y145 is a binding site for substrate.

Belongs to the D-isomer specific 2-hydroxyacid dehydrogenase family. PdxB subfamily. As to quaternary structure, homodimer.

It is found in the cytoplasm. It catalyses the reaction 4-phospho-D-erythronate + NAD(+) = (R)-3-hydroxy-2-oxo-4-phosphooxybutanoate + NADH + H(+). It participates in cofactor biosynthesis; pyridoxine 5'-phosphate biosynthesis; pyridoxine 5'-phosphate from D-erythrose 4-phosphate: step 2/5. In terms of biological role, catalyzes the oxidation of erythronate-4-phosphate to 3-hydroxy-2-oxo-4-phosphonooxybutanoate. The chain is Erythronate-4-phosphate dehydrogenase (pdxB) from Shewanella sp. (strain DB6705).